The chain runs to 63 residues: Cecropin-A1 (63 aa).

An N-terminal signal peptide occupies residues 1-23 (MKFYNIFVFVALILAITIGQSEA). Residue R62 is modified to Arginine amide.

Belongs to the cecropin family.

The protein resides in the secreted. Its function is as follows. Cecropins have lytic and antibacterial activity against several Gram-positive and Gram-negative bacteria. The protein is Cecropin-A1 (CecA1) of Drosophila mauritiana (Fruit fly).